Consider the following 49-residue polypeptide: Large ribosomal subunit protein bL33A (49 aa).

It belongs to the bacterial ribosomal protein bL33 family.

In Levilactobacillus brevis (strain ATCC 367 / BCRC 12310 / CIP 105137 / JCM 1170 / LMG 11437 / NCIMB 947 / NCTC 947) (Lactobacillus brevis), this protein is Large ribosomal subunit protein bL33A.